Reading from the N-terminus, the 576-residue chain is 3-hydroxy-3-methylglutaryl coenzyme A reductase 1 (576 aa).

Positions 1–35 (MDSRRRPSKPLLTSSGEVLHRKQASPVTDEDQIHR) are disordered. Helical transmembrane passes span 42–62 (ALPL…FSVA) and 89–109 (AIVS…IDFV). E255 acts as the Charge relay system in catalysis. N-linked (GlcNAc...) asparagine glycosylation is present at N319. Residues K387 and D463 each act as charge relay system in the active site. Residues 532-552 (LLATIVAGSVLAGELSLMSAI) form a helical membrane-spanning segment. H561 functions as the Proton donor in the catalytic mechanism. A glycan (N-linked (GlcNAc...) asparagine) is linked at N565.

It belongs to the HMG-CoA reductase family. As to expression, expressed in trichomes, leaves, flowers, roots and stems.

Its subcellular location is the endoplasmic reticulum membrane. It is found in the plastid. The protein resides in the chloroplast membrane. It localises to the peroxisome membrane. The catalysed reaction is (R)-mevalonate + 2 NADP(+) + CoA = (3S)-3-hydroxy-3-methylglutaryl-CoA + 2 NADPH + 2 H(+). It functions in the pathway metabolic intermediate biosynthesis; (R)-mevalonate biosynthesis; (R)-mevalonate from acetyl-CoA: step 3/3. In terms of biological role, catalyzes the synthesis of mevalonate, the specific precursor of all isoprenoid compounds present in plants. Component of the triterpene saponins (e.g. ginsenosides or panaxosides) and phytosterols biosynthetic pathways. Promotes triterpenes accumulation in roots. The chain is 3-hydroxy-3-methylglutaryl coenzyme A reductase 1 from Cannabis sativa (Hemp).